The following is a 29-amino-acid chain: Cyclotide cter-N (29 aa).

Positions 1–29 (GSAFCGETCVLGTCYTPDCSCTALVCLKN) form a cross-link, cyclopeptide (Gly-Asn). Intrachain disulfides connect Cys-5–Cys-19, Cys-9–Cys-21, and Cys-14–Cys-26.

Post-translationally, this is a cyclic peptide.

The protein resides in the secreted. In terms of biological role, probably participates in a plant defense mechanism. The chain is Cyclotide cter-N from Clitoria ternatea (Butterfly pea).